Reading from the N-terminus, the 173-residue chain is MSIILGIDPGSRITGYGVIRQNGRHLYYLGSGCIRTSEKELPGRLKQIYAGVSEIITQFQPDVFAIEQVFMSKNADSALKLGQARGSAIVAAVNADLPVHEYAARLIKQAVTGNGGADKSMVQNMVMSMLKLPAKPQADAADALGVAITHANTNKTLVALAGKATGARKGRYR.

Residues Asp8, Glu67, and Asp139 contribute to the active site. Mg(2+) contacts are provided by Asp8, Glu67, and Asp139.

Belongs to the RuvC family. As to quaternary structure, homodimer which binds Holliday junction (HJ) DNA. The HJ becomes 2-fold symmetrical on binding to RuvC with unstacked arms; it has a different conformation from HJ DNA in complex with RuvA. In the full resolvosome a probable DNA-RuvA(4)-RuvB(12)-RuvC(2) complex forms which resolves the HJ. The cofactor is Mg(2+).

It localises to the cytoplasm. The catalysed reaction is Endonucleolytic cleavage at a junction such as a reciprocal single-stranded crossover between two homologous DNA duplexes (Holliday junction).. Functionally, the RuvA-RuvB-RuvC complex processes Holliday junction (HJ) DNA during genetic recombination and DNA repair. Endonuclease that resolves HJ intermediates. Cleaves cruciform DNA by making single-stranded nicks across the HJ at symmetrical positions within the homologous arms, yielding a 5'-phosphate and a 3'-hydroxyl group; requires a central core of homology in the junction. The consensus cleavage sequence is 5'-(A/T)TT(C/G)-3'. Cleavage occurs on the 3'-side of the TT dinucleotide at the point of strand exchange. HJ branch migration catalyzed by RuvA-RuvB allows RuvC to scan DNA until it finds its consensus sequence, where it cleaves and resolves the cruciform DNA. The sequence is that of Crossover junction endodeoxyribonuclease RuvC from Vibrio atlanticus (strain LGP32) (Vibrio splendidus (strain Mel32)).